The sequence spans 280 residues: Aspartate/glutamate leucyltransferase (280 aa).

The protein belongs to the R-transferase family. Bpt subfamily.

The protein localises to the cytoplasm. The catalysed reaction is N-terminal L-glutamyl-[protein] + L-leucyl-tRNA(Leu) = N-terminal L-leucyl-L-glutamyl-[protein] + tRNA(Leu) + H(+). It carries out the reaction N-terminal L-aspartyl-[protein] + L-leucyl-tRNA(Leu) = N-terminal L-leucyl-L-aspartyl-[protein] + tRNA(Leu) + H(+). Its function is as follows. Functions in the N-end rule pathway of protein degradation where it conjugates Leu from its aminoacyl-tRNA to the N-termini of proteins containing an N-terminal aspartate or glutamate. This is Aspartate/glutamate leucyltransferase from Cereibacter sphaeroides (strain KD131 / KCTC 12085) (Rhodobacter sphaeroides).